The following is a 315-amino-acid chain: Coproporphyrin III ferrochelatase (315 aa).

Residues Tyr-13, Arg-30, 46–47 (RY), Ser-54, and Tyr-125 contribute to the Fe-coproporphyrin III site. Fe(2+) contacts are provided by His-183 and Glu-264.

The protein belongs to the ferrochelatase family.

It localises to the cytoplasm. The catalysed reaction is Fe-coproporphyrin III + 2 H(+) = coproporphyrin III + Fe(2+). Its pathway is porphyrin-containing compound metabolism; protoheme biosynthesis. Its function is as follows. Involved in coproporphyrin-dependent heme b biosynthesis. Catalyzes the insertion of ferrous iron into coproporphyrin III to form Fe-coproporphyrin III. The polypeptide is Coproporphyrin III ferrochelatase (Anoxybacillus flavithermus (strain DSM 21510 / WK1)).